Here is a 211-residue protein sequence, read N- to C-terminus: Thymidylate kinase (211 aa).

Residue 11–18 (GPDGAGKT) participates in ATP binding.

This sequence belongs to the thymidylate kinase family.

The catalysed reaction is dTMP + ATP = dTDP + ADP. Its function is as follows. Phosphorylation of dTMP to form dTDP in both de novo and salvage pathways of dTTP synthesis. In Streptococcus pyogenes serotype M18 (strain MGAS8232), this protein is Thymidylate kinase.